The chain runs to 371 residues: MGTAAVAAAERPKQRRSSHLWKKALLHFSLCFVMGFFTGFAPSSSSSWRAGSGGGGGVQPRHQLAASHVAVNQQVSLVPDAAAAEAAGVGNGAVVDVGDDEGGEGARRMLIVVTTTRGERRRRRGELLRLAHTLRLVRPPVVWVVVEPAADAAATAEVLRGTGVMYRHLAFRPEENFTTADAEAHAQRNAALAHVEKHRLSGVVHFADAAGVYDAHFFDEIRQIEAFGTWPVATMSAGEKKVVVEGPLCSDSKVVGWFSRDFNDGTTRAVTYNTEADLNPAGAAGTRAHTIDVSGFAFNSSILWDPERWGRPTSLPDTSQDSIKFVQEVVLEDRTKLKGIPSDCSQIMVWQYTMPMQVHAQTSTPKTHNRR.

Topologically, residues 1 to 19 are cytoplasmic; that stretch reads MGTAAVAAAERPKQRRSSH. A helical; Signal-anchor for type II membrane protein transmembrane segment spans residues 20–42; it reads LWKKALLHFSLCFVMGFFTGFAP. Topologically, residues 43–371 are lumenal; it reads SSSSSWRAGS…TSTPKTHNRR (329 aa). N-linked (GlcNAc...) asparagine glycans are attached at residues Asn176 and Asn299.

It belongs to the glycosyltransferase 43 family.

Its subcellular location is the golgi apparatus membrane. Functionally, probable beta-1,4-xylosyltransferase involved in xylan biosynthesis in cell walls. The protein is Probable beta-1,4-xylosyltransferase GT43A of Oryza sativa subsp. japonica (Rice).